The primary structure comprises 365 residues: Histidinol-phosphate aminotransferase (365 aa).

The disordered stretch occupies residues 1–23 (MSRPVPNPGILDIAPYTPGKSPV). An N6-(pyridoxal phosphate)lysine modification is found at lysine 221.

The protein belongs to the class-II pyridoxal-phosphate-dependent aminotransferase family. Histidinol-phosphate aminotransferase subfamily. Homodimer. Requires pyridoxal 5'-phosphate as cofactor.

It catalyses the reaction L-histidinol phosphate + 2-oxoglutarate = 3-(imidazol-4-yl)-2-oxopropyl phosphate + L-glutamate. Its pathway is amino-acid biosynthesis; L-histidine biosynthesis; L-histidine from 5-phospho-alpha-D-ribose 1-diphosphate: step 7/9. This Rhodopseudomonas palustris (strain BisB18) protein is Histidinol-phosphate aminotransferase.